Consider the following 689-residue polypeptide: Glycine--tRNA ligase beta subunit (689 aa).

Belongs to the class-II aminoacyl-tRNA synthetase family. In terms of assembly, tetramer of two alpha and two beta subunits.

The protein resides in the cytoplasm. The catalysed reaction is tRNA(Gly) + glycine + ATP = glycyl-tRNA(Gly) + AMP + diphosphate. The protein is Glycine--tRNA ligase beta subunit of Shewanella amazonensis (strain ATCC BAA-1098 / SB2B).